A 219-amino-acid chain; its full sequence is ATP-dependent dethiobiotin synthetase BioD (219 aa).

12 to 17 serves as a coordination point for ATP; it reads GVGKTI. Thr-16 is a Mg(2+) binding site. The active site involves Lys-32. ATP-binding positions include Asp-43 and 96–99; that span reads ETSG. Residues Asp-43 and Glu-96 each coordinate Mg(2+).

This sequence belongs to the dethiobiotin synthetase family. Homodimer. It depends on Mg(2+) as a cofactor.

It localises to the cytoplasm. The catalysed reaction is (7R,8S)-7,8-diammoniononanoate + CO2 + ATP = (4R,5S)-dethiobiotin + ADP + phosphate + 3 H(+). Its pathway is cofactor biosynthesis; biotin biosynthesis; biotin from 7,8-diaminononanoate: step 1/2. Catalyzes a mechanistically unusual reaction, the ATP-dependent insertion of CO2 between the N7 and N8 nitrogen atoms of 7,8-diaminopelargonic acid (DAPA, also called 7,8-diammoniononanoate) to form a ureido ring. The polypeptide is ATP-dependent dethiobiotin synthetase BioD (Chlamydia pneumoniae (Chlamydophila pneumoniae)).